A 284-amino-acid chain; its full sequence is NAD kinase (284 aa).

The active-site Proton acceptor is aspartate 67. NAD(+) is bound by residues 67–68, 141–142, arginine 152, lysine 169, aspartate 171, 182–187, and glutamine 241; these read DG, ND, and TGYSLS.

It belongs to the NAD kinase family. Requires a divalent metal cation as cofactor.

It is found in the cytoplasm. It catalyses the reaction NAD(+) + ATP = ADP + NADP(+) + H(+). Functionally, involved in the regulation of the intracellular balance of NAD and NADP, and is a key enzyme in the biosynthesis of NADP. Catalyzes specifically the phosphorylation on 2'-hydroxyl of the adenosine moiety of NAD to yield NADP. In Geotalea daltonii (strain DSM 22248 / JCM 15807 / FRC-32) (Geobacter daltonii), this protein is NAD kinase.